A 124-amino-acid polypeptide reads, in one-letter code: Large ribosomal subunit protein bL20 (124 aa).

It belongs to the bacterial ribosomal protein bL20 family.

Functionally, binds directly to 23S ribosomal RNA and is necessary for the in vitro assembly process of the 50S ribosomal subunit. It is not involved in the protein synthesizing functions of that subunit. This Gemmatimonas aurantiaca (strain DSM 14586 / JCM 11422 / NBRC 100505 / T-27) protein is Large ribosomal subunit protein bL20.